The following is a 180-amino-acid chain: Pro-glucagon (180 aa).

The signal sequence occupies residues 1–20 (MKSLYFVAGLFVMLVQGSWQ). The segment covering 25-35 (NTEEKSSSFPA) has biased composition (polar residues). Residues 25-59 (NTEEKSSSFPAPQTDPLGDPDQINEDKRHSQGTFT) are disordered. Position 54 is a phosphoserine (Ser-54). A propeptide spanning residues 84–89 (NKNNIA) is cleaved from the precursor. Ser-105 and Ser-108 each carry phosphoserine. Position 127 is an arginine amide (Arg-127). Positions 131–145 (DFPEEVNIVEELRRR) are excised as a propeptide. Residues Ser-150 and Ser-152 each carry the phosphoserine modification.

This sequence belongs to the glucagon family. Proglucagon is post-translationally processed in a tissue-specific manner in pancreatic A cells and intestinal L cells. In pancreatic A cells, the major bioactive hormone is glucagon cleaved by PCSK2/PC2. In the intestinal L cells PCSK1/PC1 liberates GLP-1, GLP-2, glicentin and oxyntomodulin. GLP-1 is further N-terminally truncated by post-translational processing in the intestinal L cells resulting in GLP-1(7-37) GLP-1-(7-36)amide. The C-terminal amidation is neither important for the metabolism of GLP-1 nor for its effects on the endocrine pancreas. In terms of tissue distribution, glucagon is secreted in the A cells of the islets of Langerhans. GLP-1, GLP-2, oxyntomodulin and glicentin are secreted from enteroendocrine cells throughout the gastrointestinal tract.

The protein resides in the secreted. Functionally, plays a key role in glucose metabolism and homeostasis. Regulates blood glucose by increasing gluconeogenesis and decreasing glycolysis. A counterregulatory hormone of insulin, raises plasma glucose levels in response to insulin-induced hypoglycemia. Plays an important role in initiating and maintaining hyperglycemic conditions in diabetes. Potent stimulator of glucose-dependent insulin release. Also stimulates insulin release in response to IL6. Plays important roles on gastric motility and the suppression of plasma glucagon levels. May be involved in the suppression of satiety and stimulation of glucose disposal in peripheral tissues, independent of the actions of insulin. Has growth-promoting activities on intestinal epithelium. May also regulate the hypothalamic pituitary axis (HPA) via effects on LH, TSH, CRH, oxytocin, and vasopressin secretion. Increases islet mass through stimulation of islet neogenesis and pancreatic beta cell proliferation. Inhibits beta cell apoptosis. Its function is as follows. Stimulates intestinal growth and up-regulates villus height in the small intestine, concomitant with increased crypt cell proliferation and decreased enterocyte apoptosis. The gastrointestinal tract, from the stomach to the colon is the principal target for GLP-2 action. Plays a key role in nutrient homeostasis, enhancing nutrient assimilation through enhanced gastrointestinal function, as well as increasing nutrient disposal. Stimulates intestinal glucose transport and decreases mucosal permeability. In terms of biological role, significantly reduces food intake. Inhibits gastric emptying in humans. Suppression of gastric emptying may lead to increased gastric distension, which may contribute to satiety by causing a sensation of fullness. Functionally, may modulate gastric acid secretion and the gastro-pyloro-duodenal activity. May play an important role in intestinal mucosal growth in the early period of life. In Bos taurus (Bovine), this protein is Pro-glucagon (GCG).